The sequence spans 550 residues: Chaperonin GroEL (550 aa).

Residues 29 to 32, K50, 86 to 90, G416, and D498 contribute to the ATP site; these read TAGP and DGTTT.

This sequence belongs to the chaperonin (HSP60) family. Forms a cylinder of 14 subunits composed of two heptameric rings stacked back-to-back. Interacts with the co-chaperonin GroES.

Its subcellular location is the cytoplasm. The enzyme catalyses ATP + H2O + a folded polypeptide = ADP + phosphate + an unfolded polypeptide.. Its function is as follows. Together with its co-chaperonin GroES, plays an essential role in assisting protein folding. The GroEL-GroES system forms a nano-cage that allows encapsulation of the non-native substrate proteins and provides a physical environment optimized to promote and accelerate protein folding. In Anaplasma phagocytophilum (strain HZ), this protein is Chaperonin GroEL.